Consider the following 702-residue polypeptide: Choline transporter-like protein 5-A (702 aa).

A helical membrane pass occupies residues Val21 to Ala41. Topologically, residues Trp42–Trp225 are extracellular. N-linked (GlcNAc...) asparagine glycosylation is found at Asn120, Asn173, and Asn180. A helical membrane pass occupies residues Tyr226–Leu246. Over Arg247 to Thr249 the chain is Cytoplasmic. The helical transmembrane segment at Ala250–Trp270 threads the bilayer. Topologically, residues His271–Trp308 are extracellular. A helical transmembrane segment spans residues Leu309–Leu329. The Cytoplasmic segment spans residues Arg330 to Arg334. A helical transmembrane segment spans residues Ile335–Phe355. The Extracellular portion of the chain corresponds to Tyr356–Pro357. A helical membrane pass occupies residues Ile358–Leu378. The Cytoplasmic portion of the chain corresponds to Ala379–Asn443. The helical transmembrane segment at Leu444–Gly464 threads the bilayer. Over Ala465–Ser498 the chain is Extracellular. Residues Leu499–Leu519 form a helical membrane-spanning segment. Topologically, residues Asp520 to Asp593 are cytoplasmic. The helical transmembrane segment at Phe594–Leu614 threads the bilayer. The Extracellular segment spans residues Phe615–Tyr632. A helical membrane pass occupies residues Cys633–Val653. Residues Tyr654–Lys699 are Cytoplasmic-facing.

This sequence belongs to the CTL (choline transporter-like) family.

It localises to the cell membrane. It carries out the reaction choline(out) + n H(+)(in) = choline(in) + n H(+)(out). In terms of biological role, choline/H+ antiporter. This chain is Choline transporter-like protein 5-A (slc44a5a), found in Danio rerio (Zebrafish).